The chain runs to 123 residues: Small ribosomal subunit protein uS13 (123 aa).

The tract at residues 93–123 (RRNLPVRGQKTKTNARTRKGPKRAIGGKKKK) is disordered.

It belongs to the universal ribosomal protein uS13 family. As to quaternary structure, part of the 30S ribosomal subunit. Forms a loose heterodimer with protein S19. Forms two bridges to the 50S subunit in the 70S ribosome.

In terms of biological role, located at the top of the head of the 30S subunit, it contacts several helices of the 16S rRNA. In the 70S ribosome it contacts the 23S rRNA (bridge B1a) and protein L5 of the 50S subunit (bridge B1b), connecting the 2 subunits; these bridges are implicated in subunit movement. Contacts the tRNAs in the A and P-sites. The polypeptide is Small ribosomal subunit protein uS13 (Clostridium botulinum (strain Kyoto / Type A2)).